Consider the following 487-residue polypeptide: Glutamyl-tRNA(Gln) amidotransferase subunit A (487 aa).

Residues Lys79 and Ser158 each act as charge relay system in the active site. The Acyl-ester intermediate role is filled by Ser182.

This sequence belongs to the amidase family. GatA subfamily. In terms of assembly, heterotrimer of A, B and C subunits.

It carries out the reaction L-glutamyl-tRNA(Gln) + L-glutamine + ATP + H2O = L-glutaminyl-tRNA(Gln) + L-glutamate + ADP + phosphate + H(+). In terms of biological role, allows the formation of correctly charged Gln-tRNA(Gln) through the transamidation of misacylated Glu-tRNA(Gln) in organisms which lack glutaminyl-tRNA synthetase. The reaction takes place in the presence of glutamine and ATP through an activated gamma-phospho-Glu-tRNA(Gln). This Ehrlichia chaffeensis (strain ATCC CRL-10679 / Arkansas) protein is Glutamyl-tRNA(Gln) amidotransferase subunit A.